Consider the following 1065-residue polypeptide: Bifunctional cytochrome P450/NADPH--P450 reductase (1065 aa).

A cytochrome P450 region spans residues Met1–Lys479. Residue Cys405 coordinates heme. The NADPH--P450 reductase stretch occupies residues Gln480 to Ile1065. The Flavodoxin-like domain maps to Leu496–Trp635. FMN is bound by residues Ser502–Ala507, Ser549–Gly552, Cys583–Asp585, and Thr591–Gln593. The FAD-binding FR-type domain maps to Tyr674–Pro907.

In the N-terminal section; belongs to the cytochrome P450 family. Requires heme as cofactor. The cofactor is FAD. FMN is required as a cofactor.

It carries out the reaction 2 oxidized [cytochrome P450] + NADPH = 2 reduced [cytochrome P450] + NADP(+) + H(+). The enzyme catalyses an organic molecule + reduced [NADPH--hemoprotein reductase] + O2 = an alcohol + oxidized [NADPH--hemoprotein reductase] + H2O + H(+). Functions as a fatty acid monooxygenase. Catalyzes hydroxylation of fatty acids at omega-1, omega-2 and omega-3 positions, yielding primarily omega-1 and omega-2 hydroxylated products. Metabolizes unsaturated and saturated fatty acids as well as N-acylamino acids. Has a preference for long-chain unsaturated fatty acids over saturated fatty acids. Shows activity toward saturated fatty acids with a chain length of 9-18 carbons with preference for longer fatty acids. Also displays a NADPH-dependent reductase activity in the C-terminal domain, which allows electron transfer from NADPH to the heme iron of the cytochrome P450 N-terminal domain. The sequence is that of Bifunctional cytochrome P450/NADPH--P450 reductase from Bacillus cereus (strain ATCC 14579 / DSM 31 / CCUG 7414 / JCM 2152 / NBRC 15305 / NCIMB 9373 / NCTC 2599 / NRRL B-3711).